The sequence spans 420 residues: Ammonia monooxygenase beta subunit (420 aa).

Residues methionine 1–alanine 25 form the signal peptide. Residues histidine 38, histidine 142, and histidine 144 each coordinate Cu cation. The next 2 helical transmembrane spans lie at glycine 193 to alanine 213 and isoleucine 240 to glutamate 260.

In terms of assembly, the soluble ammonia monooxygenase is a nonamer composed of three alpha subunits (AmoA), three beta subunits (AmoB) and three gamma subunits (Cytochrome c1 PetC). It depends on Cu(2+) as a cofactor.

The protein localises to the cell membrane. It localises to the cytoplasm. It catalyses the reaction AH2 + NH4(+) + O2 = hydroxylamine + A + H2O + H(+). With respect to regulation, in vitro, inhibited by acetylene. Part of the ammonia monooxygenase complex, which catalyzes the oxidation of ammonia to hydroxylamine, the first reaction in the process of ammonia oxidation to nitrite. This is Ammonia monooxygenase beta subunit from Nitrosomonas europaea (strain ATCC 19718 / CIP 103999 / KCTC 2705 / NBRC 14298).